The sequence spans 62 residues: Venom peptide 6 (62 aa).

The signal sequence occupies residues 1 to 26; it reads MKSTSVFILFAGIAIMACLQMTGTEA. 3 AXPX repeats span residues 26–29, 30–33, and 40–43; these read AAPS, ASPN, and ADPD. Positions 27–46 are excised as a propeptide; it reads APSASPNPTPVARADPDPEA.

Belongs to the MCD family. In terms of tissue distribution, expressed by the venom gland.

Its subcellular location is the secreted. It localises to the target cell membrane. Antimicrobial peptide with strong activity against the fungus B.cinerea (MIC=5 uM) and the Gram-positive bacterium S.aureus (MIC=50 uM), and no activity against C.albicans (MIC&gt;200 uM), and the Gram-negative bacterium E.coli (MIC&gt;200 uM). Shows cytolytic activity against insect cell lines. Has no hemolytic activity against human erythrocytes. In vivo, peptide injection in the vicinity of the head and thorax of lepidopteran larvae induces feeding disorder that lasts one or two days before recovering. This Eumenes pomiformis (Potter wasp) protein is Venom peptide 6.